The following is a 972-amino-acid chain: 116 kDa U5 small nuclear ribonucleoprotein component (972 aa).

At Met-1 the chain carries N-acetylmethionine. Residues 1–53 (MDTDLYDEFGNYIGPELDSDEDDDELGRETKDLDEVDEDEDDDDVGDHDEDHP) are disordered. 2 stretches are compositionally biased toward acidic residues: residues 17 to 26 (LDSDEDDDEL) and 34 to 48 (DEVDEDEDDDDVGDH). Phosphoserine is present on Ser-19. Lys-64 is covalently cross-linked (Glycyl lysine isopeptide (Lys-Gly) (interchain with G-Cter in SUMO1); alternate). Lys-64 participates in a covalent cross-link: Glycyl lysine isopeptide (Lys-Gly) (interchain with G-Cter in SUMO2); alternate. The residue at position 86 (Thr-86) is a Phosphothreonine. In terms of domain architecture, tr-type G spans 127–409 (ELIRNVTLCG…GIHLTKEELK (283 aa)). GTP contacts are provided by residues 136-143 (GHLHHGKT), 204-208 (DTPGH), and 258-261 (NKID).

Belongs to the TRAFAC class translation factor GTPase superfamily. Classic translation factor GTPase family. EF-G/EF-2 subfamily. As to quaternary structure, component of the U5 snRNP and the U4/U6-U5 tri-snRNP complex, a building block of the spliceosome. The U4/U6-U5 tri-snRNP complex is composed of the U4, U6 and U5 snRNAs and at least PRPF3, PRPF4, PRPF6, PRPF8, PRPF31, SNRNP200, TXNL4A, SNRNP40, DDX23, CD2BP2, PPIH, SNU13, EFTUD2, SART1 and USP39. Component of the pre-catalytic, catalytic and post-catalytic spliceosome complexes. Component of the minor spliceosome, which splices U12-type introns. Within this complex, interacts with CRIPT. Interacts with ERBB4 and PRPF8. Interacts with PIH1D1. Interacts with RPAP3 and URI1 in a ZNHIT2-dependent manner. Interacts with NRDE2. Interacts with FAM50A. Interacts with UBL5.

The protein resides in the nucleus. Required for pre-mRNA splicing as component of the spliceosome, including pre-catalytic, catalytic and post-catalytic spliceosomal complexes. Component of the U5 snRNP and the U4/U6-U5 tri-snRNP complex, a building block of the spliceosome. As a component of the minor spliceosome, involved in the splicing of U12-type introns in pre-mRNAs. This is 116 kDa U5 small nuclear ribonucleoprotein component (EFTUD2) from Bos taurus (Bovine).